The chain runs to 158 residues: NADH-quinone oxidoreductase subunit B (158 aa).

The [4Fe-4S] cluster site is built by Cys-37, Cys-38, Cys-102, and Cys-132.

Belongs to the complex I 20 kDa subunit family. As to quaternary structure, NDH-1 is composed of 14 different subunits. Subunits NuoB, C, D, E, F, and G constitute the peripheral sector of the complex. [4Fe-4S] cluster serves as cofactor.

It localises to the cell inner membrane. The enzyme catalyses a quinone + NADH + 5 H(+)(in) = a quinol + NAD(+) + 4 H(+)(out). In terms of biological role, NDH-1 shuttles electrons from NADH, via FMN and iron-sulfur (Fe-S) centers, to quinones in the respiratory chain. Couples the redox reaction to proton translocation (for every two electrons transferred, four hydrogen ions are translocated across the cytoplasmic membrane), and thus conserves the redox energy in a proton gradient. The protein is NADH-quinone oxidoreductase subunit B of Legionella pneumophila (strain Corby).